Here is a 284-residue protein sequence, read N- to C-terminus: RNA polymerase sigma factor RpoH (284 aa).

The sigma-70 factor domain-2 stretch occupies residues 53 to 122; it reads LILSHLRFVV…IHEYVLRNWR (70 aa). Positions 77-80 match the Interaction with polymerase core subunit RpoC motif; it reads DLIQ. Residues 228-280 form a sigma-70 factor domain-4 region; the sequence is AMQGLDERSQDIIRARWLDEDNKSTLQELADRYGVSAERVRQLEKNAMKKLRA. A DNA-binding region (H-T-H motif) is located at residues 253-272; the sequence is LQELADRYGVSAERVRQLEK.

Belongs to the sigma-70 factor family. RpoH subfamily. In terms of assembly, interacts with the RNA polymerase core enzyme.

Its subcellular location is the cytoplasm. Sigma factors are initiation factors that promote the attachment of RNA polymerase to specific initiation sites and are then released. This sigma factor is involved in regulation of expression of heat shock genes. This chain is RNA polymerase sigma factor RpoH, found in Escherichia coli O6:H1 (strain CFT073 / ATCC 700928 / UPEC).